Consider the following 1335-residue polypeptide: Bifunctional autolysin (1335 aa).

Residues Met1–Ala29 form the signal peptide. Disordered regions lie at residues Gln51–Thr88, Asn100–Glu262, and Trp514–Leu535. Composition is skewed to polar residues over residues Glu58–Thr88, Asn100–Asn127, Thr143–Ala155, Thr176–Gly223, and Ser244–Tyr258. The segment at Val303–Lys863 is N-acetylmuramoyl-L-alanine amidase. The segment covering Gly515 to Thr531 has biased composition (low complexity). GW domains lie at Asn533 to Ala610, Ala612 to Lys686, Thr700 to Ala774, Ser776 to Lys850, Ser868 to Ile943, Lys945 to Thr1020, and Gln1023 to Ile1096. Residues Gln864–Lys1335 are endo-beta-N-acetylglucosaminidase.

In the N-terminal section; belongs to the N-acetylmuramoyl-L-alanine amidase 2 family. It in the C-terminal section; belongs to the glycosyl hydrolase 73 family. In terms of assembly, oligomer; forms a ring structure at the cell surface which is important for efficient partitioning of daughter cells after cell division. In terms of processing, undergoes proteolytic processing to generate the two extracellular lytic enzymes, probably at the septal region on the cell surface.

It is found in the secreted. The catalysed reaction is Hydrolyzes the link between N-acetylmuramoyl residues and L-amino acid residues in certain cell-wall glycopeptides.. It carries out the reaction an N(4)-(oligosaccharide-(1-&gt;3)-[oligosaccharide-(1-&gt;6)]-beta-D-Man-(1-&gt;4)-beta-D-GlcNAc-(1-&gt;4)-alpha-D-GlcNAc)-L-asparaginyl-[protein] + H2O = an oligosaccharide-(1-&gt;3)-[oligosaccharide-(1-&gt;6)]-beta-D-Man-(1-&gt;4)-D-GlcNAc + N(4)-(N-acetyl-beta-D-glucosaminyl)-L-asparaginyl-[protein]. Functionally, endohydrolysis of the di-N-acetylchitobiosyl unit in high-mannose glycopeptides and glycoproteins containing the -[(Man)5(GlcNAc)2]-Asn structure. One N-acetyl-D-glucosamine residue remains attached to the protein; the rest of the oligosaccharide is released intact. Cleaves the peptidoglycan connecting the daughter cells at the end of the cell division cycle, resulting in the separation of the two newly divided cells. Acts as an autolysin in penicillin-induced lysis. The polypeptide is Bifunctional autolysin (atl) (Staphylococcus epidermidis (strain ATCC 12228 / FDA PCI 1200)).